We begin with the raw amino-acid sequence, 685 residues long: Sulfate transporter 4.1, chloroplastic (685 aa).

Residues 1–23 (MSYASLSVKDLTSLVSRSGTGSS) constitute a chloroplast transit peptide. Over residues 15–26 (VSRSGTGSSSSL) the composition is skewed to low complexity. Positions 15–53 (VSRSGTGSSSSLKPPGQTRPVKVIPLQHPDTSNEARPPS) are disordered. 12 helical membrane-spanning segments follow: residues 97–117 (LDLM…MSYA), 122–142 (LPPI…AIFG), 147–167 (LAIG…GGIA), 175–195 (IELA…MGLL), 203–223 (FISH…IGLS), 255–275 (WPPF…KHVG), 283–303 (FLRA…AKVF), 332–352 (TLLP…VGIA), 369–389 (LFGL…PATG), 406–426 (LSGL…TPMF), 434–454 (LAAI…AIFL), and 473–493 (LFFG…AFVI). Residues 518-642 (QYPEAYTYNG…VRVHDAVQVC (125 aa)) enclose the STAS domain.

The protein belongs to the SLC26A/SulP transporter (TC 2.A.53) family. In terms of tissue distribution, expressed both in roots and leaves.

Its subcellular location is the plastid. The protein resides in the chloroplast membrane. H(+)/sulfate cotransporter that may play a role in the regulation of sulfate assimilation. The polypeptide is Sulfate transporter 4.1, chloroplastic (SULTR4;1) (Arabidopsis thaliana (Mouse-ear cress)).